The chain runs to 456 residues: Probable polygalacturonase At3g15720 (456 aa).

An N-terminal signal peptide occupies residues 1–23; that stretch reads MKKKTWFLNFSLFFLQIFTSSNA. PbH1 repeat units follow at residues 169–195, 196–217, 219–239, 249–270, 278–299, and 314–341; these read CNYV…DVGA, SSNV…AINS, TSNI…SIGS, VENV…RIKT, ARMI…IIDQ, and SSAV…DFRC. The Proton donor role is filled by Asp210. Residue His233 is part of the active site.

This sequence belongs to the glycosyl hydrolase 28 family.

Its subcellular location is the secreted. The protein localises to the cell wall. It catalyses the reaction (1,4-alpha-D-galacturonosyl)n+m + H2O = (1,4-alpha-D-galacturonosyl)n + (1,4-alpha-D-galacturonosyl)m.. The chain is Probable polygalacturonase At3g15720 from Arabidopsis thaliana (Mouse-ear cress).